A 317-amino-acid polypeptide reads, in one-letter code: MTDLPFTLDQLRILRAILIQGSFKKAATSLYISQPAVSSHVHNIEKQLNIQLFDRSHRNAQLTEAGQLLLKYGGRILALCEETCRALEDLQNLQCGNLIIGASQTTGTYLMPKLIGLFRQKYPQISVQLQVHSTRRISWSVANGQLDLAIIGGEVPKELTEILEVRNFVEDELTLILPPSHPFSKFSCIQKEDLYRLRFIALDKNSTIRKVIDKILNRNGIDSSRLKTEMELSSIEAIKNAVQSGLGASFVSISAIDKELKLQLLNRVNIDKIKIKRMLSIITNYSRYRSKASETFCHEILGLLVNLPFKNAPSTEK.

One can recognise an HTH lysR-type domain in the interval 6-63 (FTLDQLRILRAILIQGSFKKAATSLYISQPAVSSHVHNIEKQLNIQLFDRSHRNAQLT). Positions 23 to 42 (FKKAATSLYISQPAVSSHVH) form a DNA-binding region, H-T-H motif.

This sequence belongs to the LysR transcriptional regulatory family.

It localises to the plastid. The protein localises to the chloroplast. Functionally, trans-acting transcriptional regulator of RuBisCO genes (rbcL and rbcS) expression. The sequence is that of Probable RuBisCO transcriptional regulator (rbcR) from Cyanidium caldarium (Red alga).